Reading from the N-terminus, the 126-residue chain is Probable S-adenosyl-L-methionine-binding protein MJ1583 (126 aa).

A TsaA-like domain is found at 4-126 (LKPIGVVEQN…FSEKLDCPKI (123 aa)). S-adenosyl-L-methionine-binding positions include 45–46 (HK), Arg75, and 106–109 (YNET).

Belongs to the tRNA methyltransferase O family.

The sequence is that of Probable S-adenosyl-L-methionine-binding protein MJ1583 from Methanocaldococcus jannaschii (strain ATCC 43067 / DSM 2661 / JAL-1 / JCM 10045 / NBRC 100440) (Methanococcus jannaschii).